A 347-amino-acid chain; its full sequence is D-fructose 1,6-bisphosphatase class 2/sedoheptulose 1,7-bisphosphatase (347 aa).

Mn(2+)-binding residues include D33, E57, D97, and E100. Substrate-binding positions include 100–102 (EGT), Y131, 176–178 (RKR), and 198–200 (DGD). E225 lines the Mn(2+) pocket.

Belongs to the FBPase class 2 family. Homotetramer. Mn(2+) serves as cofactor.

The enzyme catalyses beta-D-fructose 1,6-bisphosphate + H2O = beta-D-fructose 6-phosphate + phosphate. The catalysed reaction is D-sedoheptulose 1,7-bisphosphate + H2O = D-sedoheptulose 7-phosphate + phosphate. The protein operates within carbohydrate biosynthesis; Calvin cycle. In terms of biological role, catalyzes the hydrolysis of fructose 1,6-bisphosphate (Fru 1,6-P2) and sedoheptulose 1,7-bisphosphate (Sed 1,7-P2) to fructose 6-phosphate and sedoheptulose 7-phosphate, respectively. The protein is D-fructose 1,6-bisphosphatase class 2/sedoheptulose 1,7-bisphosphatase of Synechococcus sp. (strain JA-3-3Ab) (Cyanobacteria bacterium Yellowstone A-Prime).